The sequence spans 325 residues: MDRVLVASYPINHLIRPHSFRIDYCWSTCFTSRLNSGKERQKLSSRWRWRSMASDSTDSSSSSSFAPSVESDPSDKTSASFCIIEGPETVQDFAKMELQEIQENIRSRRNKIFLHMEEVRRLRIQQRIKNAELGISKEERENELPNFPSFIPFLPPLSSENLKLYYVTCYSLIAGIILFGGLLAPTLELKLGLGGTSYEDFIRSVHLPMQLSQVDPIVASFSGGAVGVISALMVVEVNNVKQQEHKRCKYCLGTGYLACARCSNTGALVLIEPVSTLNGEHQPLSLPKTERCQNCSGSGKVMCPTCLCTGMAMASEHDPRIDPFD.

The N-terminal 54 residues, 1-54 (MDRVLVASYPINHLIRPHSFRIDYCWSTCFTSRLNSGKERQKLSSRWRWRSMAS), are a transit peptide targeting the chloroplast. Residues 53–71 (ASDSTDSSSSSSFAPSVES) are compositionally biased toward low complexity. The interval 53–77 (ASDSTDSSSSSSFAPSVESDPSDKT) is disordered. The next 2 membrane-spanning stretches (helical) occupy residues 164-184 (LYYVTCYSLIAGIILFGGLLA) and 217-237 (IVASFSGGAVGVISALMVVEV). The tract at residues 226-317 (VGVISALMVV…CTGMAMASEH (92 aa)) is CR-type-like. The stretch at 248-255 (CKYCLGTG) is one CXXCXGXG motif repeat. A CXXCXXXG motif repeat occupies 259–266 (CARCSNTG). One copy of the CXXCXGXG motif repeat lies at 292–299 (CQNCSGSG). Residues 303–310 (CPTCLCTG) form a CXXCXXXG motif repeat.

Belongs to the orange-like family.

It is found in the plastid. The protein localises to the chloroplast membrane. Functionally, involved in chloroplast differentiation in fruit flesh. The polypeptide is Protein ORANGE-GREEN, chloroplastic (Cucumis melo (Muskmelon)).